The sequence spans 176 residues: Nucleoside triphosphate/diphosphate phosphatase (176 aa).

Arg-23 functions as the Proton donor in the catalytic mechanism. 6 residues coordinate Mg(2+): Asn-87, Asp-103, Asp-105, Asp-107, Asp-120, and Glu-123.

This sequence belongs to the Ntdp family. Mg(2+) is required as a cofactor.

The catalysed reaction is a ribonucleoside 5'-triphosphate + H2O = a ribonucleoside 5'-diphosphate + phosphate + H(+). It catalyses the reaction a ribonucleoside 5'-diphosphate + H2O = a ribonucleoside 5'-phosphate + phosphate + H(+). In terms of biological role, has nucleoside phosphatase activity towards nucleoside triphosphates and nucleoside diphosphates. The protein is Nucleoside triphosphate/diphosphate phosphatase of Bacillus anthracis (strain A0248).